The sequence spans 204 residues: Nucleoside triphosphate pyrophosphatase (204 aa).

Asp78 serves as the catalytic Proton acceptor.

Belongs to the Maf family. A divalent metal cation is required as a cofactor.

The protein localises to the cytoplasm. It catalyses the reaction a ribonucleoside 5'-triphosphate + H2O = a ribonucleoside 5'-phosphate + diphosphate + H(+). The catalysed reaction is a 2'-deoxyribonucleoside 5'-triphosphate + H2O = a 2'-deoxyribonucleoside 5'-phosphate + diphosphate + H(+). Its function is as follows. Nucleoside triphosphate pyrophosphatase. May have a dual role in cell division arrest and in preventing the incorporation of modified nucleotides into cellular nucleic acids. The sequence is that of Nucleoside triphosphate pyrophosphatase from Prochlorococcus marinus (strain MIT 9215).